Here is a 461-residue protein sequence, read N- to C-terminus: MTKNFRFEKDSMGQIKVPSEALWGAQTQRSIINFSIGEELIPIELIYSLTVIKRAAAISNFKLGLINNVKKDLIIEACTEILDGKHDSQFPLKIWQTGSGTQTNMNINEVISNIAALKTNSGLGSHHPIHPNDDVNKSQSTNDTFPAAIQISVVTQIIKKLVPSIKELTKVLDSKSNKWKDLIKIGRTHFQDAVPISLGQEVSAWSKQLKDAEDALIISLNELCFLPLGGTAVGTGINCPKDFSKESIKSISEYTGLFFYKSKNHFSLMASHDRLAQVMGQIKILASALFKISNDIKILSSGPRSGIYELIIPKNEPGSSIMPGKVNPTQCEALSMVCTQVMGFEYAVSIANASGTLQMNEYKPLIGFNILTSIKLLNHAISNFRLKLVEGIQPNPKTIKANLENSLMLVTALVPKIGYEKAAEIANLAFNESINLKEATIKLGYLTANEFEDAINTNKMI.

Residues 99-101 (SGT), 130-133 (HPND), 140-142 (STN), and T188 each bind substrate. The active-site Proton donor/acceptor is H189. S319 is an active-site residue. Residues S320 and 325-327 (KVN) contribute to the substrate site.

The protein belongs to the class-II fumarase/aspartase family. Fumarase subfamily. Homotetramer.

It localises to the cytoplasm. The catalysed reaction is (S)-malate = fumarate + H2O. The protein operates within carbohydrate metabolism; tricarboxylic acid cycle; (S)-malate from fumarate: step 1/1. In terms of biological role, involved in the TCA cycle. Catalyzes the stereospecific interconversion of fumarate to L-malate. This chain is Fumarate hydratase class II, found in Prochlorococcus marinus subsp. pastoris (strain CCMP1986 / NIES-2087 / MED4).